The primary structure comprises 220 residues: Ribose-5-phosphate isomerase A (220 aa).

Substrate is bound by residues 28–31 (TGST), 81–84 (DGAD), and 94–97 (KGGG). Residue glutamate 103 is the Proton acceptor of the active site. Residue lysine 121 coordinates substrate.

Belongs to the ribose 5-phosphate isomerase family. Homodimer.

The catalysed reaction is aldehydo-D-ribose 5-phosphate = D-ribulose 5-phosphate. The protein operates within carbohydrate degradation; pentose phosphate pathway; D-ribose 5-phosphate from D-ribulose 5-phosphate (non-oxidative stage): step 1/1. Functionally, catalyzes the reversible conversion of ribose-5-phosphate to ribulose 5-phosphate. The protein is Ribose-5-phosphate isomerase A of Shewanella putrefaciens (strain CN-32 / ATCC BAA-453).